The chain runs to 20 residues: Unknown protein NF028 from 2D-PAGE (20 aa).

The polypeptide is Unknown protein NF028 from 2D-PAGE (Naegleria fowleri (Brain eating amoeba)).